The primary structure comprises 215 residues: UPF0502 protein YceH (215 aa).

N6-acetyllysine is present on lysine 80.

Belongs to the UPF0502 family.

This is UPF0502 protein YceH from Escherichia coli O127:H6 (strain E2348/69 / EPEC).